The chain runs to 169 residues: Small proline-rich protein 3 (169 aa).

Low complexity predominate over residues 1–24; it reads MSSYQQKQTFTPPPQLQQQQVKQP. The disordered stretch occupies residues 1–57; it reads MSSYQQKQTFTPPPQLQQQQVKQPSQPPPQEIFVPTTKEPCHSKVPQPGNTKIPEPG. Serine 2 carries the post-translational modification N-acetylserine. 14 repeat units span residues 43–50, 51–58, 59–66, 67–74, 75–82, 83–90, 91–98, 99–106, 107–114, 115–122, 123–130, 131–138, 139–146, and 147–154. A 14 X 8 AA approximate tandem repeats region spans residues 43-154; the sequence is SKVPQPGNTK…GYTKLPEPCP (112 aa). The segment at 150 to 169 is disordered; that stretch reads PEPCPSTVTPGPAQQKTKQK. The span at 155–169 shows a compositional bias: polar residues; that stretch reads STVTPGPAQQKTKQK.

It localises to the cytoplasm. In terms of biological role, cross-linked envelope protein of keratinocytes. This Homo sapiens (Human) protein is Small proline-rich protein 3 (SPRR3).